A 624-amino-acid chain; its full sequence is Laccase-1 (624 aa).

Positions 1-20 (MRGLAKLFFLSCSFVSLVSS) are cleaved as a signal peptide. 2 Plastocyanin-like domains span residues 72-183 (FASP…HSPN) and 195-343 (DRIV…CMFG). H117 and H119 together coordinate Cu cation. An intrachain disulfide couples C138 to C578. An N-linked (GlcNAc...) asparagine glycan is attached at N149. H162 and H164 together coordinate Cu cation. N-linked (GlcNAc...) asparagine glycosylation is found at N242 and N430. In terms of domain architecture, Plastocyanin-like 3 spans 469 to 562 (IIINNLDTVI…GKLAVIVVQP (94 aa)). Residues H480, H483, and H485 each coordinate Cu cation. N503 is a glycosylation site (N-linked (GlcNAc...) asparagine). Positions 543, 544, 545, and 549 each coordinate Cu cation. Positions 579–604 (ANTDPNAFGPAKRSSSPSIQSSKTSS) are disordered. The span at 592-604 (SSSPSIQSSKTSS) shows a compositional bias: low complexity.

Belongs to the multicopper oxidase family. The cofactor is Cu cation.

The protein resides in the secreted. It is found in the cell wall. It carries out the reaction 4 hydroquinone + O2 = 4 benzosemiquinone + 2 H2O. Functionally, laccase that catalyzes the oxidation of certain aromatic compounds, including L-dopa, to quinones, which then polymerize to melanin. Able to oxidize a wide variety of aromatic diphenol and diamino groups in the ortho, meta, and para positions but not monophenolic groups such as in phenol, tyramine, or tyrosine. Plays an important role in virulence. Plays a role in dissemination to extrapulmonary sites but is not involved in pulmonary growth or in elicitation of cellular immune responses in the lung. The sequence is that of Laccase-1 from Cryptococcus neoformans var. neoformans serotype D (strain B-3501A) (Filobasidiella neoformans).